A 555-amino-acid polypeptide reads, in one-letter code: Disabled homolog 1 (555 aa).

Positions methionine 1 to arginine 26 are disordered. Basic and acidic residues predominate over residues alanine 15 to arginine 26. In terms of domain architecture, PID spans lysine 36–leucine 189. 3 positions are modified to phosphotyrosine: tyrosine 198, tyrosine 220, and tyrosine 232. Disordered stretches follow at residues leucine 384–methionine 410, phenylalanine 418–threonine 437, and asparagine 468–serine 555. The segment covering proline 391–threonine 403 has biased composition (polar residues). Composition is skewed to low complexity over residues threonine 470–threonine 479 and proline 487–serine 501. A Phosphoserine; by CDK5 modification is found at serine 491. The segment covering threonine 504–phenylalanine 513 has biased composition (acidic residues).

In terms of assembly, associates with the SH2 domains of SRC, FYN and ABL. Interacts (phosphorylated on tyrosine residues) with CRK and CRKL (via respective SH2 domain). Interacts with DAB2IP, SIAH1, LRP8 and VLDLR. Interacts with LRP1. Interacts with APLP1 (via NPXY motif). Interacts with DAB2IP. Interacts with ZSWIM8. Post-translationally, phosphorylated by FYN on Tyr-198 and Tyr-220 upon reelin induction in embryonic neurons. Also phosphorylated on Ser-491 independently of reelin signaling. In terms of processing, ubiquitinated by various cullin-5-RING E3 ubiquitin-protein ligase complexes (ECS complexes) following ligand-binding and phosphorylation, leading to its degradation. Ubiquitinated by the ECS(SOCS7) complex in the cortical plate of the developing cerebral cortex following ligand-binding and phosphorylation by FYN, leading to its degradation by the proteasome. Recognized by ZSWIM8 through a disorder targets misorder mechanism that eliminates misfolded DAB1 via ubiquitination and proteasomal degradation.

It localises to the cytoplasm. Its function is as follows. Signaling adapter of the reelin-mediated signaling pathway, which regulates the migration and differentiation of postmitotic neurons during brain development. Mediates intracellular transduction of Reelin signaling following reelin (RELN)-binding to its receptor: acts by docking proteins through its phosphotyrosine residues and PID domain. The chain is Disabled homolog 1 (DAB1) from Macaca fascicularis (Crab-eating macaque).